The chain runs to 248 residues: PF03932 family protein CutC (248 aa).

It belongs to the CutC family. As to quaternary structure, homodimer.

It is found in the cytoplasm. In Escherichia coli O157:H7, this protein is PF03932 family protein CutC.